Reading from the N-terminus, the 102-residue chain is Thioredoxin (102 aa).

Positions 1–102 constitute a Thioredoxin domain; the sequence is MVKVVSAENF…SLIRLINQHS (102 aa). Cysteines 28 and 31 form a disulfide.

It belongs to the thioredoxin family.

Participates in various redox reactions through the reversible oxidation of its active center dithiol to a disulfide and catalyzes dithiol-disulfide exchange reactions. The sequence is that of Thioredoxin (trxA) from Chlamydia caviae (strain ATCC VR-813 / DSM 19441 / 03DC25 / GPIC) (Chlamydophila caviae).